An 896-amino-acid polypeptide reads, in one-letter code: Desmocollin-3 (896 aa).

An N-terminal signal peptide occupies residues 1-27; it reads MAAAGPRRSVRGAVCLHLLLTLVIFSR. The propeptide occupies 28 to 135; the sequence is AGEACKKVIL…RETVLRRAKR (108 aa). Cadherin domains follow at residues 136–243, 244–355, 356–471, 472–579, and 580–690; these read RWAP…HPVF, TEAI…APTF, RQNA…GPEC, TPAA…EILQ, and EYVV…ILGK. The Extracellular segment spans residues 136-690; the sequence is RWAPIPCSMQ…SRSTGVILGK (555 aa). N166 carries N-linked (GlcNAc...) asparagine glycosylation. Residues N392, N546, and N629 are each glycosylated (N-linked (GlcNAc...) asparagine). Residues 691-711 traverse the membrane as a helical segment; sequence WAILAILLGIALLFSVLLTLV. Topologically, residues 712–896 are cytoplasmic; sequence CGVFGATKGK…ITLAEACTKR (185 aa).

May form homodimers. Interacts with DSG1; there is evidence to suggest that the interaction promotes cell-cell adhesion of keratinocytes. Expressed throughout the basal and spinous layer of the epidermis with weak expression in the granular layer (at protein level). Also expressed in the buccal mucosa, esophagus and cervix (at protein level).

It is found in the cell membrane. The protein resides in the cell junction. The protein localises to the desmosome. It localises to the cytoplasm. A component of desmosome cell-cell junctions which are required for positive regulation of cellular adhesion. Required for cell-cell adhesion in the epidermis, as a result required for the maintenance of the dermal cohesion and the dermal barrier function. Required for cell-cell adhesion of epithelial cell layers surrounding the telogen hair club, as a result plays an important role in telogen hair shaft anchorage. Essential for successful completion of embryo compaction and embryo development. The sequence is that of Desmocollin-3 (DSC3) from Homo sapiens (Human).